A 274-amino-acid polypeptide reads, in one-letter code: Large ribosomal subunit protein uL2 (274 aa).

Disordered regions lie at residues 38–57 (KRTG…VGGG) and 224–256 (AMNP…KGYK). Positions 229–239 (DHPHGGGEGRN) are enriched in basic and acidic residues.

This sequence belongs to the universal ribosomal protein uL2 family. Part of the 50S ribosomal subunit. Forms a bridge to the 30S subunit in the 70S ribosome.

One of the primary rRNA binding proteins. Required for association of the 30S and 50S subunits to form the 70S ribosome, for tRNA binding and peptide bond formation. It has been suggested to have peptidyltransferase activity; this is somewhat controversial. Makes several contacts with the 16S rRNA in the 70S ribosome. The sequence is that of Large ribosomal subunit protein uL2 from Acinetobacter baumannii (strain AB307-0294).